The sequence spans 603 residues: Proline--tRNA ligase (603 aa).

This sequence belongs to the class-II aminoacyl-tRNA synthetase family. ProS type 1 subfamily. As to quaternary structure, homodimer.

It is found in the cytoplasm. It carries out the reaction tRNA(Pro) + L-proline + ATP = L-prolyl-tRNA(Pro) + AMP + diphosphate. Its function is as follows. Catalyzes the attachment of proline to tRNA(Pro) in a two-step reaction: proline is first activated by ATP to form Pro-AMP and then transferred to the acceptor end of tRNA(Pro). As ProRS can inadvertently accommodate and process non-cognate amino acids such as alanine and cysteine, to avoid such errors it has two additional distinct editing activities against alanine. One activity is designated as 'pretransfer' editing and involves the tRNA(Pro)-independent hydrolysis of activated Ala-AMP. The other activity is designated 'posttransfer' editing and involves deacylation of mischarged Ala-tRNA(Pro). The misacylated Cys-tRNA(Pro) is not edited by ProRS. The sequence is that of Proline--tRNA ligase from Microcystis aeruginosa (strain NIES-843 / IAM M-2473).